Consider the following 97-residue polypeptide: MDPKVNVVPPALHLVDPQIQMTITRMEDAVVHDQNNAGPKVYPIILRLGSQLSLSMAKRNLDSLEARAFQSTPIVVKMTKLATTEELPDEFVVVTAK.

The 9b domain occupies 8-97 (VPPALHLVDP…PDEFVVVTAK (90 aa)).

It belongs to the coronavirus group 2 protein 9b family. As to quaternary structure, homodimer.

Its subcellular location is the host cytoplasmic vesicle membrane. The protein localises to the host cytoplasm. The sequence is that of Protein 9b from Rhinolophus sinicus (Chinese rufous horseshoe bat).